The sequence spans 216 residues: Pyridoxine/pyridoxamine 5'-phosphate oxidase 1 (216 aa).

Residues 10–13 (RREY) and Lys68 contribute to the substrate site. FMN is bound by residues 63–68 (RIVLLK), 78–79 (YT), Lys85, and Gln107. Tyr125, Arg129, and Ser133 together coordinate substrate. Residues 142–143 (QS) and Trp186 contribute to the FMN site. Substrate is bound at residue 192–194 (RLH). Residue Arg196 participates in FMN binding.

This sequence belongs to the pyridoxamine 5'-phosphate oxidase family. In terms of assembly, homodimer. The cofactor is FMN.

The catalysed reaction is pyridoxamine 5'-phosphate + O2 + H2O = pyridoxal 5'-phosphate + H2O2 + NH4(+). It catalyses the reaction pyridoxine 5'-phosphate + O2 = pyridoxal 5'-phosphate + H2O2. It participates in cofactor metabolism; pyridoxal 5'-phosphate salvage; pyridoxal 5'-phosphate from pyridoxamine 5'-phosphate: step 1/1. Its pathway is cofactor metabolism; pyridoxal 5'-phosphate salvage; pyridoxal 5'-phosphate from pyridoxine 5'-phosphate: step 1/1. Catalyzes the oxidation of either pyridoxine 5'-phosphate (PNP) or pyridoxamine 5'-phosphate (PMP) into pyridoxal 5'-phosphate (PLP). The chain is Pyridoxine/pyridoxamine 5'-phosphate oxidase 1 from Hydrogenovibrio crunogenus (strain DSM 25203 / XCL-2) (Thiomicrospira crunogena).